Consider the following 511-residue polypeptide: MNNEMILVLDFGGQYNQLIARRVREANVYCEVIPYNASLERIKSYNAKGIIFTGGPNSVLDEGAPKCDPGVFELGIPVLGICYGMQLMSVMLGGSVTAANQREYGKVEICVDKSQPLFRDVDENTICWMSHTYYVDTPPKGFEVIAKSANCPTGAMQHVEKNLYAVQFHPEVMHTPKGKEMLKNFLYNICGCKGDWKMSSFVENSINAIREKVGDKKVLCALSGGVDSSVAAVLIHKAIGKQLTCIFVDHGLLRKYEGDQVEQIFRKQYDINLIRVNCEDRFLQRLKGVSDPETKRKIIGEEFIRVFEDEAKKIGKVDFLVQGTIYPDVIESGIGDAAVIKSHHNVGGLPEHVDFKEIIEPLRSLFKDEVRRAGEELGIPEDLVWRQPFPGPGLAIRVIGDLTKEKLDTLRDTDYIFREEIKAAGLDKEINQYFTVLTNMRSVGVMGDERTYDYALALRAVTTTDFMTADWARIPYDILEKVSTRIVNEVKQINRIVYDITSKPPATIEWE.

Residues 5 to 195 (MILVLDFGGQ…LYNICGCKGD (191 aa)) form the Glutamine amidotransferase type-1 domain. The Nucleophile role is filled by Cys-82. Catalysis depends on residues His-169 and Glu-171. The region spanning 196–386 (WKMSSFVENS…LGIPEDLVWR (191 aa)) is the GMPS ATP-PPase domain. An ATP-binding site is contributed by 223 to 229 (SGGVDSS).

As to quaternary structure, homodimer.

It catalyses the reaction XMP + L-glutamine + ATP + H2O = GMP + L-glutamate + AMP + diphosphate + 2 H(+). It participates in purine metabolism; GMP biosynthesis; GMP from XMP (L-Gln route): step 1/1. Functionally, catalyzes the synthesis of GMP from XMP. This Ruminiclostridium cellulolyticum (strain ATCC 35319 / DSM 5812 / JCM 6584 / H10) (Clostridium cellulolyticum) protein is GMP synthase [glutamine-hydrolyzing].